Consider the following 548-residue polypeptide: Chaperonin GroEL 3 (548 aa).

ATP is bound by residues 30–33 (TLGP), Lys51, 87–91 (DGTTT), Gly415, and Asp496.

The protein belongs to the chaperonin (HSP60) family. In terms of assembly, forms a cylinder of 14 subunits composed of two heptameric rings stacked back-to-back. Interacts with the co-chaperonin GroES.

Its subcellular location is the cytoplasm. The enzyme catalyses ATP + H2O + a folded polypeptide = ADP + phosphate + an unfolded polypeptide.. In terms of biological role, together with its co-chaperonin GroES, plays an essential role in assisting protein folding. The GroEL-GroES system forms a nano-cage that allows encapsulation of the non-native substrate proteins and provides a physical environment optimized to promote and accelerate protein folding. In Nitrobacter winogradskyi (strain ATCC 25391 / DSM 10237 / CIP 104748 / NCIMB 11846 / Nb-255), this protein is Chaperonin GroEL 3.